Consider the following 820-residue polypeptide: Leucine-rich repeat and guanylate kinase domain-containing protein (820 aa).

Residues 72–83 (EAEAEQEEKQQE) are compositionally biased toward basic and acidic residues. The tract at residues 72-96 (EAEAEQEEKQQEDGESEESEESEMQ) is disordered. A compositionally biased stretch (acidic residues) spans 84–94 (DGESEESEESE). LRR repeat units lie at residues 129 to 149 (YLNLNLSHCELVDISILCGYV), 150 to 171 (HLQKLNLSGNRIEDLSCVSCMP), 172 to 193 (YLLELNASQNKLTTFFNFKPPQ), 194 to 215 (NLKKVDFSSNLISEMYDLSAYH), 216 to 237 (TLTQLILDNNEIEEITGLENCI), 238 to 259 (SLTHLSLAGNKITTIKGLGTLP), 260 to 280 (IKVLSLSNNMIETITGLEELK), 281 to 302 (ALQNLDLSHNQISSLQGLENHD), and 303 to 324 (LLEVINLEDNKIKELSEIEYIE). The region spanning 337 to 375 (NPIQTKPEYWFFVIYMLLRLTELDQQKIKVEEKVFAVNK) is the LRRCT domain. Residues 414–597 (YPMLILTGPA…AYQKLSELIR (184 aa)) form the Guanylate kinase-like domain. ATP is bound at residue 421-428 (GPAACGKR). The interval 800–820 (TIMDPGSNTKPTLPPIPHGRR) is disordered. Over residues 811 to 820 (TLPPIPHGRR) the composition is skewed to pro residues.

In terms of assembly, interacts (via guanylate kinase-like domain) with RIMBP3 (via coiled-coil region). Interacts (via guanylate kinase-like domain) with HOOK2. Interacts (via LRRCT domain) with KLC3. Interacts with HOOK1 and HOOK3. As to expression, highly expressed in the testis. During spermatid development is initially localized to a supra-nuclear region of round spermatids, and is particularly evident at the leading edge of the developing acrosome and acroplaxome. As maturation proceeded and nuclear elongation initiated, LRGUK moves distally to ultimately reside on the microtubules of the manchette. LRGUK is also evident in the sperm basal body and the sperm tail.

Its subcellular location is the cytoplasmic vesicle. The protein localises to the secretory vesicle. The protein resides in the acrosome. It localises to the cytoplasm. It is found in the cytoskeleton. Its subcellular location is the cilium basal body. Involved in multiple aspects of sperm assembly including acrosome attachment, shaping of the sperm head and in the early aspects of axoneme development. Not essential for primary cilium biogenesis. This is Leucine-rich repeat and guanylate kinase domain-containing protein (Lrguk) from Mus musculus (Mouse).